A 265-amino-acid chain; its full sequence is Exosome complex component Rrp4 (265 aa).

The S1 motif domain occupies 65 to 137; the sequence is GDNVIGKIVD…EVNNIDLTTK (73 aa). Positions 147-205 constitute a KH domain; the sequence is KGGQIVKITPSRVPRVIGRGGSMINMIKKLTMTRIIVGQNGWIWVSGKNDALEKLAIEA. The interval 241 to 265 is disordered; that stretch reads EIPKLEEEPQGEDEVNGNDGEARGA.

The protein belongs to the RRP4 family. In terms of assembly, component of the archaeal exosome complex. Forms a trimer of Rrp4 and/or Csl4 subunits. The trimer associates with a hexameric ring-like arrangement composed of 3 Rrp41-Rrp42 heterodimers.

The protein localises to the cytoplasm. Non-catalytic component of the exosome, which is a complex involved in RNA degradation. Increases the RNA binding and the efficiency of RNA degradation. Confers strong poly(A) specificity to the exosome. This chain is Exosome complex component Rrp4, found in Pyrococcus abyssi (strain GE5 / Orsay).